A 436-amino-acid chain; its full sequence is 3-ketoacyl-CoA thiolase (436 aa).

Cys-99 functions as the Acyl-thioester intermediate in the catalytic mechanism. Active-site proton acceptor residues include His-392 and Cys-422.

It belongs to the thiolase-like superfamily. Thiolase family. As to quaternary structure, heterotetramer of two alpha chains (FadJ) and two beta chains (FadI).

It is found in the cytoplasm. The catalysed reaction is an acyl-CoA + acetyl-CoA = a 3-oxoacyl-CoA + CoA. The protein operates within lipid metabolism; fatty acid beta-oxidation. In terms of biological role, catalyzes the final step of fatty acid oxidation in which acetyl-CoA is released and the CoA ester of a fatty acid two carbons shorter is formed. The polypeptide is 3-ketoacyl-CoA thiolase (Shewanella sp. (strain ANA-3)).